The primary structure comprises 89 residues: Protein YxiC (89 aa).

This chain is Protein YxiC (yxiC), found in Bacillus subtilis (strain 168).